The following is an 878-amino-acid chain: NUT family member 2E (878 aa).

5 disordered regions span residues 273 to 324, 417 to 511, 527 to 560, 622 to 757, and 775 to 878; these read WSQG…DDSC, QKSQ…VPEE, LLGP…PPDP, RLPP…EEEE, and WLPQ…HCSQ. Composition is skewed to pro residues over residues 278–288 and 427–444; these read PLPPPPPPAAQ and CLPP…PPAP. Basic and acidic residues-rich tracts occupy residues 537–551 and 622–631; these read EPEK…KQPQ and RLPPLKEKQH.

Belongs to the NUT family.

The protein is NUT family member 2E (NUTM2E) of Homo sapiens (Human).